A 117-amino-acid chain; its full sequence is Immunoglobulin lambda variable 1-51 (117 aa).

A signal peptide spans 1–19 (MTCSPLLLTLLIHCTGSWA). Gln-20 is subject to Pyrrolidone carboxylic acid. A framework-1 region spans residues 20-44 (QSVLTQPPSVSAAPGQKVTISCSGS). Residues 20 to 117 (QSVLTQPPSV…CGTWDSSLSA (98 aa)) form the Ig-like domain. Cys-41 and Cys-108 are disulfide-bonded. A complementarity-determining-1 region spans residues 45–52 (SSNIGNNY). Residues 53–69 (VSWYQQLPGTAPKLLIY) form a framework-2 region. The segment at 70 to 72 (DNN) is complementarity-determining-2. The segment at 73 to 108 (KRPSGIPDRFSGSKSGTSATLGITGLQTGDEADYYC) is framework-3. The tract at residues 109-117 (GTWDSSLSA) is complementarity-determining-3.

As to quaternary structure, immunoglobulins are composed of two identical heavy chains and two identical light chains; disulfide-linked.

The protein resides in the secreted. The protein localises to the cell membrane. In terms of biological role, v region of the variable domain of immunoglobulin light chains that participates in the antigen recognition. Immunoglobulins, also known as antibodies, are membrane-bound or secreted glycoproteins produced by B lymphocytes. In the recognition phase of humoral immunity, the membrane-bound immunoglobulins serve as receptors which, upon binding of a specific antigen, trigger the clonal expansion and differentiation of B lymphocytes into immunoglobulins-secreting plasma cells. Secreted immunoglobulins mediate the effector phase of humoral immunity, which results in the elimination of bound antigens. The antigen binding site is formed by the variable domain of one heavy chain, together with that of its associated light chain. Thus, each immunoglobulin has two antigen binding sites with remarkable affinity for a particular antigen. The variable domains are assembled by a process called V-(D)-J rearrangement and can then be subjected to somatic hypermutations which, after exposure to antigen and selection, allow affinity maturation for a particular antigen. This Homo sapiens (Human) protein is Immunoglobulin lambda variable 1-51.